Here is a 546-residue protein sequence, read N- to C-terminus: Immunoglobulin-like domain-containing receptor 1 (546 aa).

Residues 1–23 (MAWPKLPAPWLLLCTWLPAGCLS) form the signal peptide. The region spanning 24 to 162 (LLVTVQHTER…TSGDPDKEVK (139 aa)) is the Ig-like V-type domain. At 24-167 (LLVTVQHTER…DKEVKLIVLH (144 aa)) the chain is on the extracellular side. A disulfide bridge links Cys45 with Cys145. The chain crosses the membrane as a helical span at residues 168 to 188 (WLTVIFIILGALLLLLLIGVC). The Cytoplasmic segment spans residues 189 to 546 (WCQCCPQYCC…SSHSGRSVVI (358 aa)). The tract at residues 399–546 (WSGRHRSSRL…SSHSGRSVVI (148 aa)) is disordered. Basic and acidic residues predominate over residues 442–457 (RCQERPRRPSPRESTQ). The span at 458–467 (RHGRRRRHRS) shows a compositional bias: basic residues. Phosphoserine occurs at positions 499 and 501. Over residues 527–539 (GSVERRSEKDSSH) the composition is skewed to basic and acidic residues.

This sequence belongs to the immunoglobulin superfamily. LISCH7 family. As to quaternary structure, homooligomer. Interacts with MARVELD2 and OCLN; the interaction is required to recruit MARVELD2 to tricellular contacts. Interacts (via C-terminus) with TRA2A, TRA2B and SRSF1. Interacts with PLSCR1. As to expression, mainly expressed in prostate and to a lower extent in testis, pancreas, kidney, heart and liver.

The protein resides in the cell membrane. The protein localises to the cell junction. It localises to the tight junction. It is found in the cytoplasm. Its subcellular location is the cytosol. In terms of biological role, maintains epithelial barrier function by recruiting MARVELD2/tricellulin to tricellular tight junctions (tTJs). Crucial for normal hearing by maintaining the structural and functional integrity of tTJs, which are critical for the survival of auditory neurosensory HCs. Mediates fatty acids and lipoproteins-stimulated CCK/cholecystokinin secretion in the small intestine. In the inner ear, may regulate alternative pre-mRNA splicing via binding to TRA2A, TRA2B and SRSF1. Functionally, (Microbial infection) Promotes influenza virus infection by inhibiting viral nucleoprotein NP binding to PLSCR1 and thereby PLSCR1-mediated antiviral activity. The polypeptide is Immunoglobulin-like domain-containing receptor 1 (Homo sapiens (Human)).